Consider the following 203-residue polypeptide: Non-histone protein 10 (203 aa).

Residue serine 2 is modified to N-acetylserine. Disordered regions lie at residues 78-97 (KSKT…PKRP) and 161-203 (ISNI…VSSN). The segment at residues 94 to 158 (PKRPTNAYLL…RYQMEMEIYN (65 aa)) is a DNA-binding region (HMG box).

As to quaternary structure, component of the chromatin-remodeling INO80 complex, at least composed of ARP4, ARP5, ARP8, RVB1, RVB2, TAF14, NHP10, IES1, IES3, IES4, IES6, ACT1, IES2, IES5 and INO80.

It localises to the nucleus. Its function is as follows. Probably involved in transcription regulation via its interaction with the INO80 complex, a chromatin remodeling complex. The chain is Non-histone protein 10 (NHP10) from Saccharomyces cerevisiae (strain ATCC 204508 / S288c) (Baker's yeast).